The following is a 320-amino-acid chain: Lipoyl synthase (320 aa).

[4Fe-4S] cluster contacts are provided by cysteine 67, cysteine 72, cysteine 78, cysteine 93, cysteine 97, cysteine 100, and serine 307. Positions 79-296 (FNHGTATFMI…REKANEMGFE (218 aa)) constitute a Radical SAM core domain.

This sequence belongs to the radical SAM superfamily. Lipoyl synthase family. Requires [4Fe-4S] cluster as cofactor.

Its subcellular location is the cytoplasm. It carries out the reaction [[Fe-S] cluster scaffold protein carrying a second [4Fe-4S](2+) cluster] + N(6)-octanoyl-L-lysyl-[protein] + 2 oxidized [2Fe-2S]-[ferredoxin] + 2 S-adenosyl-L-methionine + 4 H(+) = [[Fe-S] cluster scaffold protein] + N(6)-[(R)-dihydrolipoyl]-L-lysyl-[protein] + 4 Fe(3+) + 2 hydrogen sulfide + 2 5'-deoxyadenosine + 2 L-methionine + 2 reduced [2Fe-2S]-[ferredoxin]. It functions in the pathway protein modification; protein lipoylation via endogenous pathway; protein N(6)-(lipoyl)lysine from octanoyl-[acyl-carrier-protein]: step 2/2. Its function is as follows. Catalyzes the radical-mediated insertion of two sulfur atoms into the C-6 and C-8 positions of the octanoyl moiety bound to the lipoyl domains of lipoate-dependent enzymes, thereby converting the octanoylated domains into lipoylated derivatives. In Glaesserella parasuis serovar 5 (strain SH0165) (Haemophilus parasuis), this protein is Lipoyl synthase.